The primary structure comprises 552 residues: Probable bifunctional methylthioribose-1-phosphate isomerase/methylthioribulose-1-phosphate dehydratase (552 aa).

The methylthioribose-1-phosphate isomerase activity stretch occupies residues 1–333 (MRPIDDSSLT…VVTEHGVVHG (333 aa)). Substrate contacts are provided by residues 49-51 (RGA), Arg91, and Gln195. Asp236 functions as the Proton donor in the catalytic mechanism. Substrate is bound at residue 246–247 (NK). The interval 334 to 535 (TVAAEPGARI…AVCELVLRTG (202 aa)) is methylthioribulose-1-phosphate dehydratase activity. Zn(2+)-binding residues include His427 and His429.

In the N-terminal section; belongs to the eIF-2B alpha/beta/delta subunits family. MtnA subfamily. This sequence in the C-terminal section; belongs to the aldolase class II family. MtnB subfamily. Requires Zn(2+) as cofactor.

It carries out the reaction 5-(methylsulfanyl)-alpha-D-ribose 1-phosphate = 5-(methylsulfanyl)-D-ribulose 1-phosphate. The enzyme catalyses 5-(methylsulfanyl)-D-ribulose 1-phosphate = 5-methylsulfanyl-2,3-dioxopentyl phosphate + H2O. The protein operates within amino-acid biosynthesis; L-methionine biosynthesis via salvage pathway; L-methionine from S-methyl-5-thio-alpha-D-ribose 1-phosphate: step 1/6. It functions in the pathway amino-acid biosynthesis; L-methionine biosynthesis via salvage pathway; L-methionine from S-methyl-5-thio-alpha-D-ribose 1-phosphate: step 2/6. Functionally, bifunctional protein that catalyzes the interconversion of methylthioribose-1-phosphate (MTR-1-P) into methylthioribulose-1-phosphate (MTRu-1-P), and the dehydration of methylthioribulose-1-phosphate (MTRu-1-P) into 2,3-diketo-5-methylthiopentyl-1-phosphate (DK-MTP-1-P). The protein is Probable bifunctional methylthioribose-1-phosphate isomerase/methylthioribulose-1-phosphate dehydratase (mtnAB) of Nocardia farcinica (strain IFM 10152).